The primary structure comprises 66 residues: Large ribosomal subunit protein bL32 (66 aa).

It belongs to the bacterial ribosomal protein bL32 family.

This is Large ribosomal subunit protein bL32 from Rickettsia conorii (strain ATCC VR-613 / Malish 7).